The sequence spans 187 residues: Preprocaerulein clone PXC202 (187 aa).

Residues 1–9 (NDERRFADG) constitute a propeptide that is removed on maturation. The tract at residues 1 to 21 (NDERRFADGQQDYTGWMDFGR) is disordered. Tyr-13 carries the sulfotyrosine modification. Position 19 is a phenylalanine amide (Phe-19). The propeptide occupies 23 to 73 (DDEDDVNERDVRGFGSFLGKALKAALKIGANALGGSPQQREANDERRFADG). A Sulfotyrosine modification is found at Tyr-77. Residue Phe-83 is modified to Phenylalanine amide. The propeptide occupies 87-137 (DDEDDVNERDVRGFGSFLGKALKAALKIGANALGGSLQQREVNDERRFADG). Tyr-141 carries the post-translational modification Sulfotyrosine. Phe-147 is subject to Phenylalanine amide. Positions 151–152 (DG) are excised as a propeptide. Tyr-156 carries the sulfotyrosine modification. Phe-162 carries the post-translational modification Phenylalanine amide. Positions 166–187 (DDEDDVHERDVRGFGSFLGKAL) are excised as a propeptide.

The protein belongs to the gastrin/cholecystokinin family. In terms of tissue distribution, expressed by the skin glands.

Its subcellular location is the secreted. In terms of biological role, the pharmacological activities of caerulein are quite similar to the physiological activities of gastrin and related peptides. This is Preprocaerulein clone PXC202 from Xenopus laevis (African clawed frog).